The sequence spans 445 residues: Adenine permease AdeP (445 aa).

Residues 1-28 (MSHQHTTQTSGQGMLERVFKLREHGTTA) are Cytoplasmic-facing. Residues 29-52 (RTEVIAGFTTFLTMVYIVFVNPQI) form a helical membrane-spanning segment. Residues 53–62 (LGVAGMDTSA) lie on the Periplasmic side of the membrane. The chain crosses the membrane as a helical span at residues 63–81 (VFVTTCLIAAFGSIMMGLF). The Cytoplasmic portion of the chain corresponds to 82-83 (AN). The chain crosses the membrane as a discontinuously helical span at residues 84-100 (LPVALAPAMGLNAFFAF). Residues 101–112 (VVVQAMGLPWQV) lie on the Periplasmic side of the membrane. A helical transmembrane segment spans residues 113-132 (GMGAIFWGAIGLLLLTIFRV). Residues 133–144 (RYWMIANIPVSL) lie on the Cytoplasmic side of the membrane. A helical membrane pass occupies residues 145-165 (RVGITSGIGLFIGMMGLKNAG). The Periplasmic segment spans residues 166 to 181 (VIVANPETLVSIGNLT). Residues 182–199 (SHSVLLGILGFFIIAILA) traverse the membrane as a helical segment. Residues 200 to 203 (SRNI) lie on the Cytoplasmic side of the membrane. Residues 204–222 (HAAVLVSIVVTTLLGWMLG) traverse the membrane as a helical segment. The Periplasmic portion of the chain corresponds to 223 to 250 (DVHYNGIVSAPPSVMTVVGHVDLAGSFN). A helical membrane pass occupies residues 251-279 (LGLAGVIFSFMLVNLFDSSGTLIGVTDKA). At 280–292 (GLADEKGKFPRMK) the chain is on the cytoplasmic side. Residues 293 to 308 (QALYVDSISSVTGSFI) traverse the membrane as a helical segment. Over 309-310 (GT) the chain is Periplasmic. A discontinuously helical membrane pass occupies residues 311–326 (SSVTAYIESSSGVSVG). Residues 327–330 (GRTG) are Cytoplasmic-facing. The chain crosses the membrane as a helical span at residues 331-345 (LTAVVVGLLFLLVIF). At 346-356 (LSPLAGMVPGY) the chain is on the periplasmic side. Residues 357 to 376 (AAAGALIYVGVLMTSSLARV) traverse the membrane as a helical segment. Residues 377–381 (NWQDL) are Cytoplasmic-facing. Residues 382 to 417 (TESVPAFITAVMMPFSFSITEGIALGFISYCVMKIG) constitute an intramembrane region (discontinuously helical). Over 418-445 (TGRLRDLSPCVIIVALLFILKIVFIDAH) the chain is Cytoplasmic.

The protein belongs to the nucleobase:cation symporter-2 (NCS2) (TC 2.A.40) family. Azg-like subfamily.

It is found in the cell inner membrane. With respect to regulation, internal adenine may inhibit transport. High-affinity transporter for adenine. The polypeptide is Adenine permease AdeP (adeP) (Escherichia coli (strain K12)).